The chain runs to 480 residues: Adenylosuccinate synthetase, chloroplastic (480 aa).

Residues methionine 1 to tyrosine 54 constitute a chloroplast transit peptide. Residues glycine 69–lysine 75 and glycine 97–threonine 99 each bind GTP. Aspartate 70 serves as the catalytic Proton acceptor. Residues aspartate 70 and glycine 97 each coordinate Mg(2+). IMP-binding positions include aspartate 70–lysine 73, asparagine 95–histidine 98, threonine 187, arginine 201, asparagine 278, threonine 293, and arginine 357. The Proton donor role is filled by histidine 98. Residue threonine 353 to arginine 359 participates in substrate binding. GTP-binding positions include arginine 359, lysine 385–aspartate 387, and glycine 468–glycine 470.

The protein belongs to the adenylosuccinate synthetase family. As to quaternary structure, homodimer. The cofactor is Mg(2+).

The protein localises to the plastid. It is found in the chloroplast. The catalysed reaction is IMP + L-aspartate + GTP = N(6)-(1,2-dicarboxyethyl)-AMP + GDP + phosphate + 2 H(+). Its pathway is purine metabolism; AMP biosynthesis via de novo pathway; AMP from IMP: step 1/2. Its function is as follows. Plays an important role in the de novo pathway and in the salvage pathway of purine nucleotide biosynthesis. Catalyzes the first committed step in the biosynthesis of AMP from IMP. The protein is Adenylosuccinate synthetase, chloroplastic of Ostreococcus tauri.